Here is a 156-residue protein sequence, read N- to C-terminus: 6,7-dimethyl-8-ribityllumazine synthase (156 aa).

5-amino-6-(D-ribitylamino)uracil-binding positions include F22, 56 to 58, and 80 to 82; these read AFE and AVV. A (2S)-2-hydroxy-3-oxobutyl phosphate-binding site is contributed by 85–86; that stretch reads ET. The active-site Proton donor is the H88. F113 lines the 5-amino-6-(D-ribitylamino)uracil pocket. Residue R127 coordinates (2S)-2-hydroxy-3-oxobutyl phosphate.

It belongs to the DMRL synthase family.

It carries out the reaction (2S)-2-hydroxy-3-oxobutyl phosphate + 5-amino-6-(D-ribitylamino)uracil = 6,7-dimethyl-8-(1-D-ribityl)lumazine + phosphate + 2 H2O + H(+). It participates in cofactor biosynthesis; riboflavin biosynthesis; riboflavin from 2-hydroxy-3-oxobutyl phosphate and 5-amino-6-(D-ribitylamino)uracil: step 1/2. Catalyzes the formation of 6,7-dimethyl-8-ribityllumazine by condensation of 5-amino-6-(D-ribitylamino)uracil with 3,4-dihydroxy-2-butanone 4-phosphate. This is the penultimate step in the biosynthesis of riboflavin. The protein is 6,7-dimethyl-8-ribityllumazine synthase of Pediococcus pentosaceus (strain ATCC 25745 / CCUG 21536 / LMG 10740 / 183-1w).